Reading from the N-terminus, the 214-residue chain is Large ribosomal subunit protein uL16-like (214 aa).

Belongs to the universal ribosomal protein uL16 family. In terms of assembly, component of the 60S large ribosomal subunit (LSU).

Its subcellular location is the cytoplasm. Functionally, testis-specific component of the ribosome, which is required for the transition from prophase to metaphase in male meiosis I. Compensates for the inactivated X-linked RPL10 paralog during spermatogenesis. The ribosome is a large ribonucleoprotein complex responsible for the synthesis of proteins in the cell. The small ribosomal subunit (SSU) binds messenger RNAs (mRNAs) and translates the encoded message by selecting cognate aminoacyl-transfer RNA (tRNA) molecules. The large subunit (LSU) contains the ribosomal catalytic site termed the peptidyl transferase center (PTC), which catalyzes the formation of peptide bonds, thereby polymerizing the amino acids delivered by tRNAs into a polypeptide chain. The nascent polypeptides leave the ribosome through a tunnel in the LSU and interact with protein factors that function in enzymatic processing, targeting, and the membrane insertion of nascent chains at the exit of the ribosomal tunnel. This is Large ribosomal subunit protein uL16-like (RPL10L) from Macaca fascicularis (Crab-eating macaque).